A 160-amino-acid chain; its full sequence is Early E3 18.5 kDa glycoprotein (160 aa).

An N-terminal signal peptide occupies residues 1–17; it reads MIRYIILGLLTLASAHG. The Lumenal segment spans residues 18-124; sequence TTQKVDFKEP…PPQNCVENTG (107 aa). 2 disulfide bridges follow: C29–C46 and C40–C101. N-linked (GlcNAc...) asparagine; by host glycosylation is found at N30 and N79. A helical membrane pass occupies residues 125–145; the sequence is TFCCTAMLITVLALVCTLLYI. Topologically, residues 146-160 are cytoplasmic; sequence KYKSRRSFIEEKKMP. Residues 157–160 carry the Di-lysine motif motif; the sequence is KKMP.

It belongs to the adenoviridae E19 family. In terms of processing, both disulfide bonds are absolutely critical for the interaction with MHC antigens. N-glycosylated; high-mannose.

It is found in the host endoplasmic reticulum membrane. Its function is as follows. Binds and retains class I heavy chains in the endoplasmic reticulum during the early period of virus infection, thereby impairing their transport to the cell surface. Also delays the expression of class I alleles that it cannot affect by direct retention. Binds transporters associated with antigen processing (TAP) and acts as a tapasin inhibitor, preventing class I/TAP association. In consequence, infected cells are masked for immune recognition by cytotoxic T-lymphocytes. This Homo sapiens (Human) protein is Early E3 18.5 kDa glycoprotein.